Consider the following 525-residue polypeptide: Peptide chain release factor 3 (525 aa).

The tr-type G domain maps to 11-279 (DKRRTFAIIS…TYLEYAPQPA (269 aa)). GTP is bound by residues 20 to 27 (SHPDAGKT), 88 to 92 (DTPGH), and 142 to 145 (NKLD).

The protein belongs to the TRAFAC class translation factor GTPase superfamily. Classic translation factor GTPase family. PrfC subfamily.

Its subcellular location is the cytoplasm. Its function is as follows. Increases the formation of ribosomal termination complexes and stimulates activities of RF-1 and RF-2. It binds guanine nucleotides and has strong preference for UGA stop codons. It may interact directly with the ribosome. The stimulation of RF-1 and RF-2 is significantly reduced by GTP and GDP, but not by GMP. This chain is Peptide chain release factor 3, found in Levilactobacillus brevis (strain ATCC 367 / BCRC 12310 / CIP 105137 / JCM 1170 / LMG 11437 / NCIMB 947 / NCTC 947) (Lactobacillus brevis).